The following is a 711-amino-acid chain: Retrovirus-related Pol polyprotein from type-1 retrotransposable element R2 (711 aa).

The Reverse transcriptase domain occupies 45–323; sequence LHLLRGHVPT…QTFRYLGHFF (279 aa). Positions 444–711 are nucleic acid-binding endonuclease; the sequence is LFSCPSFDHL…RAVWSRQAGA (268 aa).

The enzyme catalyses DNA(n) + a 2'-deoxyribonucleoside 5'-triphosphate = DNA(n+1) + diphosphate. This Popillia japonica (Japanese beetle) protein is Retrovirus-related Pol polyprotein from type-1 retrotransposable element R2.